We begin with the raw amino-acid sequence, 273 residues long: SUMO-1 cysteine protease S273R (273 aa).

Active-site residues include histidine 168 and asparagine 187. Residue glutamine 226 coordinates substrate. Cysteine 232 functions as the Nucleophile in the catalytic mechanism.

The protein belongs to the peptidase C63 family.

The protein resides in the host cytoplasm. The protein localises to the virion. Its function is as follows. Cysteine protease that plays several role during infection including processing of the structural polyprotein or inhibition of the host immune response. Catalyzes the maturation of the pp220 and pp62 polyprotein precursors into core-shell proteins. Plays a role in the disruption of host pyroptosis via specific cleavage of gasdermin D/GSDMD. In addition, strongly decreases the host cGAS-STING signaling by targeting IKBKE via its enzymatic activity. Also impairs host FOXJ1-mediated antiviral effect via degradation of FOXJ1. This Ornithodoros (relapsing fever ticks) protein is SUMO-1 cysteine protease S273R.